The chain runs to 296 residues: ATP synthase peripheral stalk subunit OSCP, mitochondrial (296 aa).

Belongs to the ATPase delta chain family. In terms of assembly, component of the ATP synthase complex composed at least of ATP5F1A/subunit alpha, ATP5F1B/subunit beta, ATP5MC1/subunit c (homooctomer), MT-ATP6/subunit a, MT-ATP8/subunit 8, ATP5ME/subunit e, ATP5MF/subunit f, ATP5MG/subunit g, ATP5MK/subunit k, ATP5MJ/subunit j, ATP5F1C/subunit gamma, ATP5F1D/subunit delta, ATP5F1E/subunit epsilon, ATP5PF/subunit F6, ATP5PB/subunit b, ATP5PD/subunit d, ATP5PO/subunit OSCP. ATP synthase complex consists of a soluble F(1) head domain (subunits alpha(3) and beta(3)) - the catalytic core - and a membrane F(0) domain - the membrane proton channel (subunits c, a, 8, e, f, g, k and j). These two domains are linked by a central stalk (subunits gamma, delta, and epsilon) rotating inside the F1 region and a stationary peripheral stalk (subunits F6, b, d, and OSCP).

Its subcellular location is the mitochondrion. The protein localises to the mitochondrion inner membrane. Functionally, subunit OSCP, of the mitochondrial membrane ATP synthase complex (F(1)F(0) ATP synthase or Complex V) that produces ATP from ADP in the presence of a proton gradient across the membrane which is generated by electron transport complexes of the respiratory chain. ATP synthase complex consist of a soluble F(1) head domain - the catalytic core - and a membrane F(1) domain - the membrane proton channel. These two domains are linked by a central stalk rotating inside the F(1) region and a stationary peripheral stalk. During catalysis, ATP synthesis in the catalytic domain of F(1) is coupled via a rotary mechanism of the central stalk subunits to proton translocation. In vivo, can only synthesize ATP although its ATP hydrolase activity can be activated artificially in vitro. Part of the complex F(0) domain. Part of the complex F(0) domain and the peripheric stalk, which acts as a stator to hold the catalytic alpha(3)beta(3) subcomplex and subunit a/ATP6 static relative to the rotary elements. The chain is ATP synthase peripheral stalk subunit OSCP, mitochondrial from Dictyostelium discoideum (Social amoeba).